The sequence spans 450 residues: MRKLFGTDGIRGVANVHPMTMEIAMQVGRAIAFLVKKENYRHRIVIGKDTRLSGYMIENAIVAGICSMGVDVLLVGPLPTPGIAFITTSMRADAGVVISASHNPFQDNGIKIFFSDGFKLPDAMELKIEDLVLSQRMLALQPLAEEVGRASRIDDAKGRYIVFLKNTFPKKYTLDGFHIVIDCAHGATYGVAPHVFEELGAKVTALGIEPNGQNINAGCGALHPELMAGKVKELGADIGLAFDGDGDRLIVCDEHGVVVDGDHVMAICAKELLAQRKSKKKTLVATVMSNMGLEVAMKKMGGHLVRADVGDRYVVECMRKNGYSFGGEQSGHLVFLEHMTTGDGILAALQILAIMKKRKKTLSELAQVMQSFPQVLKNVRTAKKISVDSIVGFADAVKKYEMQLGDTGRILVRPSGTEPVIRVMVEGLDSAEINDIADELCELIRRVSNS.

S101 (phosphoserine intermediate) is an active-site residue. S101, D243, D245, and D247 together coordinate Mg(2+). A Phosphoserine modification is found at S101.

It belongs to the phosphohexose mutase family. Mg(2+) serves as cofactor. Post-translationally, activated by phosphorylation.

It carries out the reaction alpha-D-glucosamine 1-phosphate = D-glucosamine 6-phosphate. Its function is as follows. Catalyzes the conversion of glucosamine-6-phosphate to glucosamine-1-phosphate. The sequence is that of Phosphoglucosamine mutase from Desulfotalea psychrophila (strain LSv54 / DSM 12343).